The following is a 300-amino-acid chain: Protein YIF1B-B (300 aa).

The segment at 1–46 (MNQESSFRAPPKRRVRGSNPNISNPHQLFDDTSGGPVPHGGDFPNH) is disordered. Over 1–142 (MNQESSFRAP…APRFDINAPD (142 aa)) the chain is Cytoplasmic. Residues 143-163 (LYIPVMAFITYILVAGLALGT) traverse the membrane as a helical segment. At 164–178 (QSRFSPEILGMQASS) the chain is on the extracellular side. A helical transmembrane segment spans residues 179–199 (ALAWLIVEVLAILLSLYLVTV). Residues 200 to 205 (NTDLTT) are Cytoplasmic-facing. The helical transmembrane segment at 206–226 (VDLVAFSGYKYVGMISGVIAG) threads the bilayer. Position 227 (Leu227) is a topological domain, extracellular. A helical transmembrane segment spans residues 228 to 248 (LFGNTGYYVVLAWCCISIVFF). At 249 to 278 (MIRTLRLKILSEAAAEGVLVRGARNQLRMY) the chain is on the cytoplasmic side. The helical transmembrane segment at 279–299 (LTMAIAAVQPIFMYWLTYHLV) threads the bilayer. Position 300 (Arg300) is a topological domain, extracellular.

It belongs to the YIF1 family.

It is found in the endoplasmic reticulum membrane. It localises to the golgi apparatus membrane. Its subcellular location is the endoplasmic reticulum-Golgi intermediate compartment membrane. Functionally, functions in endoplasmic reticulum to Golgi vesicle-mediated transport and regulates the proper organization of the endoplasmic reticulum and the Golgi. Plays a key role in targeting to neuronal dendrites receptors such as HTR1A. Plays also a role in primary cilium and sperm flagellum assembly probably through protein transport to these compartments. The sequence is that of Protein YIF1B-B (yif1b-b) from Xenopus laevis (African clawed frog).